A 640-amino-acid polypeptide reads, in one-letter code: uncharacterized protein (640 aa).

The TIR domain maps to 184–328; that stretch reads VKRDTIFIIK…KVQRSIDTMI (145 aa). A disordered region spans residues 613 to 640; the sequence is LPNDLDDEDEELDDSTLGRPDSDEEGGE. Residues 616–626 are compositionally biased toward acidic residues; the sequence is DLDDEDEELDD.

This is an uncharacterized protein from Sinorhizobium fredii (strain NBRC 101917 / NGR234).